Here is a 471-residue protein sequence, read N- to C-terminus: ATP synthase subunit beta (471 aa).

156–163 (GGAGVGKT) is an ATP binding site.

Belongs to the ATPase alpha/beta chains family. F-type ATPases have 2 components, CF(1) - the catalytic core - and CF(0) - the membrane proton channel. CF(1) has five subunits: alpha(3), beta(3), gamma(1), delta(1), epsilon(1). CF(0) has three main subunits: a(1), b(2) and c(9-12). The alpha and beta chains form an alternating ring which encloses part of the gamma chain. CF(1) is attached to CF(0) by a central stalk formed by the gamma and epsilon chains, while a peripheral stalk is formed by the delta and b chains.

Its subcellular location is the cell membrane. The catalysed reaction is ATP + H2O + 4 H(+)(in) = ADP + phosphate + 5 H(+)(out). Functionally, produces ATP from ADP in the presence of a proton gradient across the membrane. The catalytic sites are hosted primarily by the beta subunits. The polypeptide is ATP synthase subunit beta (Lawsonia intracellularis (strain PHE/MN1-00)).